A 491-amino-acid polypeptide reads, in one-letter code: (R)-citramalate synthase CimA (491 aa).

Residues 3 to 254 enclose the Pyruvate carboxyltransferase domain; the sequence is VRIFDTTLRD…DTKIKMEKLY (252 aa).

This sequence belongs to the alpha-IPM synthase/homocitrate synthase family. In terms of assembly, homodimer.

The catalysed reaction is pyruvate + acetyl-CoA + H2O = (3R)-citramalate + CoA + H(+). It functions in the pathway amino-acid biosynthesis; L-isoleucine biosynthesis; 2-oxobutanoate from pyruvate: step 1/3. Its function is as follows. Catalyzes the condensation of pyruvate and acetyl-coenzyme A to form (R)-citramalate. In Methanocaldococcus jannaschii (strain ATCC 43067 / DSM 2661 / JAL-1 / JCM 10045 / NBRC 100440) (Methanococcus jannaschii), this protein is (R)-citramalate synthase CimA (cimA).